Consider the following 590-residue polypeptide: Arginine--tRNA ligase (590 aa).

The 'HIGH' region signature appears at 130 to 140; that stretch reads PNIAKEMHVGH.

This sequence belongs to the class-I aminoacyl-tRNA synthetase family. As to quaternary structure, monomer.

It localises to the cytoplasm. The enzyme catalyses tRNA(Arg) + L-arginine + ATP = L-arginyl-tRNA(Arg) + AMP + diphosphate. This Synechococcus sp. (strain CC9311) protein is Arginine--tRNA ligase.